The following is a 444-amino-acid chain: Alanyl-tRNA editing protein Aarsd1 (444 aa).

Zn(2+) is bound by residues histidine 109 and histidine 113. Phosphoserine is present on serine 174. Zn(2+) is bound by residues cysteine 209 and histidine 213.

Belongs to the class-II aminoacyl-tRNA synthetase family. Alax-L subfamily. Zn(2+) serves as cofactor.

Its subcellular location is the cytoplasm. In terms of biological role, functions in trans to edit the amino acid moiety from incorrectly charged tRNA(Ala). The polypeptide is Alanyl-tRNA editing protein Aarsd1 (AARSD1) (Bos taurus (Bovine)).